A 131-amino-acid polypeptide reads, in one-letter code: Profilin-1 (131 aa).

The protein belongs to the profilin family. Occurs in many kinds of cells as a complex with monomeric actin in a 1:1 ratio.

The protein resides in the cytoplasm. Its subcellular location is the cytoskeleton. Binds to actin and affects the structure of the cytoskeleton. At high concentrations, profilin prevents the polymerization of actin, whereas it enhances it at low concentrations. By binding to PIP2, it inhibits the formation of IP3 and DG. The sequence is that of Profilin-1 from Ambrosia artemisiifolia (Common ragweed).